The chain runs to 273 residues: Tryptase (273 aa).

The signal sequence occupies residues 1–18; sequence MLKLLLLTLPLLSSLVHA. Residues 19 to 28 constitute a propeptide, activation peptide; it reads APGPAMTREG. The region spanning 29-270 is the Peptidase S1 domain; the sequence is IVGGQEAHGN…YLDWIHHYVP (242 aa). N-linked (GlcNAc...) asparagine glycosylation occurs at Asn-49. Cys-57 and Cys-73 form a disulfide bridge. Active-site charge relay system residues include His-72 and Asp-119. Asn-130 carries an N-linked (GlcNAc...) asparagine glycan. Disulfide bonds link Cys-153–Cys-228, Cys-186–Cys-209, and Cys-218–Cys-246. Ser-222 (charge relay system) is an active-site residue.

Belongs to the peptidase S1 family. Tryptase subfamily.

It catalyses the reaction Preferential cleavage: Arg-|-Xaa, Lys-|-Xaa, but with more restricted specificity than trypsin.. Its function is as follows. Tryptase is the major neutral protease present in mast cells and is secreted upon the coupled activation-degranulation response of this cell type. May play a role in innate immunity. In Mus musculus (Mouse), this protein is Tryptase (Tpsab1).